The primary structure comprises 339 residues: MPGLRVPERRFSRVLGVGSYRPRREVSNKEVCTWIDSTEEWIETRTGIRSRRIAEPDETIQVMGVAASRRALEHAGVDPAEIDLVVVSTMTNFVHTPPLSVAIAHELGADNAGGFDLSAACAGFCHALSIAADAVESGGSRHVLVVATERMTDVIDLADRSLSFLFGDGAGAAVVGPSDVPGIGPVVRGIDGTGLGSLHMSSSWDQYVEDPSVGRPALVMDGKRVFRWAVADVVPAAREALEVAGLTVGDLVAFVPHQANLRIIDVLVDRLGVPEHVVVSRDAEDTGNTSSASVALALDRLVRSGAVPGGGPALMIGFGAGLSYAGQALLLPDPPSTPA.

Active-site residues include Cys121 and His257. The ACP-binding stretch occupies residues Gln258–Arg262. Asn288 is an active-site residue.

It belongs to the thiolase-like superfamily. FabH family. In terms of assembly, homodimer.

Its subcellular location is the cytoplasm. The catalysed reaction is malonyl-[ACP] + propanoyl-CoA + H(+) = 3-oxopentanoyl-[ACP] + CO2 + CoA. It catalyses the reaction 2-methylpropanoyl-CoA + malonyl-[ACP] + H(+) = 4-methyl-3-oxopentanoyl-[ACP] + CO2 + CoA. It carries out the reaction malonyl-[ACP] + acetyl-CoA + H(+) = 3-oxobutanoyl-[ACP] + CO2 + CoA. The enzyme catalyses butanoyl-CoA + malonyl-[ACP] + H(+) = 3-oxohexanoyl-[ACP] + CO2 + CoA. Its pathway is lipid metabolism; fatty acid biosynthesis. Catalyzes the condensation reaction of fatty acid synthesis by the addition to an acyl acceptor of two carbons from malonyl-ACP. Catalyzes the first condensation reaction which initiates fatty acid synthesis and may therefore play a role in governing the total rate of fatty acid production. Possesses both acetoacetyl-ACP synthase and acetyl transacylase activities. Propionyl-CoA and isobutyryl-CoA were the two most preferred substrates, although acetyl-CoA and butyryl-CoA could also be accepted and elongated. Involved in the biosynthesis of R1128 polyketide. The protein is Beta-ketoacyl-[acyl-carrier-protein] synthase III of Streptomyces lividans.